The primary structure comprises 492 residues: Prostaglandin E2 receptor EP4 subtype (492 aa).

Residues 1 to 19 (MSIPGTNASSSQASNPLNS) are Extracellular-facing. The N-linked (GlcNAc...) asparagine glycan is linked to N7. The chain crosses the membrane as a helical span at residues 20-43 (PVTIPAVMFIFGVVGNLVAIVVLC). Topologically, residues 44–55 (KSRKEQKETTFY) are cytoplasmic. A helical membrane pass occupies residues 56-79 (TLVCGLAVTDLLGTLLVSPVTIAT). Residues 80–96 (YLKGQWPGGHALCEYST) lie on the Extracellular side of the membrane. A disulfide bond links C92 and C170. The chain crosses the membrane as a helical span at residues 97–115 (FILLFFGLSGLSIICAMSI). Topologically, residues 116 to 135 (ERYLAINHAYFYSHYVDKRL) are cytoplasmic. The chain crosses the membrane as a helical span at residues 136-160 (AGLTLFAVYASNVLFCALPSMGLGS). Residues 161–184 (SRLQYPATWCFIDWTTNVTAHAAF) lie on the Extracellular side of the membrane. Residues 185–211 (SYMYAGFSSFLILATVLCNVLVCGALL) traverse the membrane as a helical segment. The Cytoplasmic portion of the chain corresponds to 212–273 (RMHRQFMRRT…RSFRRIAGAE (62 aa)). Residues 274–301 (IQMVILLIATSLVVLICSIPLVVRVFVN) form a helical membrane-spanning segment. Over 302-318 (QLYRPQLEPVIGKNPDL) the chain is Extracellular. The chain crosses the membrane as a helical span at residues 319 to 338 (QAIRIASVSPILDPWIYILL). Residues 339–492 (RKTVLSKAIE…ETLNLSEKCI (154 aa)) lie on the Cytoplasmic side of the membrane. The segment covering 361–374 (RRERSGPHCSDSRR) has biased composition (basic and acidic residues). The segment at 361–383 (RRERSGPHCSDSRRTSSAVSGHS) is disordered. S380, S383, S385, and S388 each carry phosphoserine.

Belongs to the G-protein coupled receptor 1 family. As to quaternary structure, interacts with FEM1A. Post-translationally, phosphorylation mediates agonist-mediated desensitization by promoting cytoplasmic retention.

It is found in the cell membrane. Functionally, receptor for prostaglandin E2 (PGE2). The activity of this receptor is mediated by G(s) proteins that stimulate adenylate cyclase. Has a relaxing effect on smooth muscle. May play an important role in regulating renal hemodynamics, intestinal epithelial transport, adrenal aldosterone secretion, and uterine function. In Bos taurus (Bovine), this protein is Prostaglandin E2 receptor EP4 subtype (PTGER4).